The chain runs to 239 residues: Pyridoxine 5'-phosphate synthase (239 aa).

A 3-amino-2-oxopropyl phosphate-binding site is contributed by N7. 9–10 (DH) serves as a coordination point for 1-deoxy-D-xylulose 5-phosphate. R18 contributes to the 3-amino-2-oxopropyl phosphate binding site. H43 serves as the catalytic Proton acceptor. 1-deoxy-D-xylulose 5-phosphate-binding residues include R45 and H50. The Proton acceptor role is filled by E70. T100 lines the 1-deoxy-D-xylulose 5-phosphate pocket. H191 serves as the catalytic Proton donor. 3-amino-2-oxopropyl phosphate is bound by residues G192 and 213 to 214 (GH).

It belongs to the PNP synthase family. As to quaternary structure, homooctamer; tetramer of dimers.

The protein resides in the cytoplasm. The enzyme catalyses 3-amino-2-oxopropyl phosphate + 1-deoxy-D-xylulose 5-phosphate = pyridoxine 5'-phosphate + phosphate + 2 H2O + H(+). The protein operates within cofactor biosynthesis; pyridoxine 5'-phosphate biosynthesis; pyridoxine 5'-phosphate from D-erythrose 4-phosphate: step 5/5. Catalyzes the complicated ring closure reaction between the two acyclic compounds 1-deoxy-D-xylulose-5-phosphate (DXP) and 3-amino-2-oxopropyl phosphate (1-amino-acetone-3-phosphate or AAP) to form pyridoxine 5'-phosphate (PNP) and inorganic phosphate. This is Pyridoxine 5'-phosphate synthase from Geobacter sp. (strain M21).